A 145-amino-acid polypeptide reads, in one-letter code: D-aminoacyl-tRNA deacylase (145 aa).

Positions 137–138 match the Gly-cisPro motif, important for rejection of L-amino acids motif; that stretch reads GP.

It belongs to the DTD family. Homodimer.

It is found in the cytoplasm. The enzyme catalyses glycyl-tRNA(Ala) + H2O = tRNA(Ala) + glycine + H(+). It catalyses the reaction a D-aminoacyl-tRNA + H2O = a tRNA + a D-alpha-amino acid + H(+). Functionally, an aminoacyl-tRNA editing enzyme that deacylates mischarged D-aminoacyl-tRNAs. Also deacylates mischarged glycyl-tRNA(Ala), protecting cells against glycine mischarging by AlaRS. Acts via tRNA-based rather than protein-based catalysis; rejects L-amino acids rather than detecting D-amino acids in the active site. By recycling D-aminoacyl-tRNA to D-amino acids and free tRNA molecules, this enzyme counteracts the toxicity associated with the formation of D-aminoacyl-tRNA entities in vivo and helps enforce protein L-homochirality. This is D-aminoacyl-tRNA deacylase from Dichelobacter nodosus (strain VCS1703A).